The chain runs to 235 residues: MSTVFALANIYKSFGRNKEVPVIVNATLQIKKGEIVALIGKSGSGKSTLLHIAGLLDTPSSGSILLNNIECTDKTSDKDKTYLRRHFLGFIYQFHHLLQEFSVLENVMLPQIITGKSKSIAKKNAMEILERVRLQDKLSMPISQLSGGERQRVAIARSLINCPLIVLADEPTGSLDNNTALEVFSLLQEYAKEKNIAILLATHNYSLAQKACRIVKIDSGILRSYSIDESGFNKI.

The ABC transporter domain maps to F5–I235. Position 40-47 (G40–S47) interacts with ATP.

The protein belongs to the ABC transporter superfamily. Lipoprotein translocase (TC 3.A.1.125) family. In terms of assembly, the complex is composed of two ATP-binding proteins (LolD) and two transmembrane proteins (LolC and LolE).

The protein resides in the cell inner membrane. Part of the ABC transporter complex LolCDE involved in the translocation of mature outer membrane-directed lipoproteins, from the inner membrane to the periplasmic chaperone, LolA. Responsible for the formation of the LolA-lipoprotein complex in an ATP-dependent manner. The chain is Lipoprotein-releasing system ATP-binding protein LolD from Ehrlichia chaffeensis (strain ATCC CRL-10679 / Arkansas).